We begin with the raw amino-acid sequence, 510 residues long: NAD(P)H-quinone oxidoreductase subunit 2, chloroplastic (510 aa).

12 consecutive transmembrane segments (helical) span residues 24–44, 59–79, 99–119, 124–144, 149–169, 183–203, 229–249, 295–315, 323–343, 347–367, 395–415, and 418–438; these read LLLFNGSFIFPECILIFGLIL, WFYFISSTSLVMSITALLFRW, IFQFLILLCSTLCIPLSVEYI, MAITEFLLFVLTATLGGMFLC, LITIFVAPECFSLCSYLLSGY, YLLMGGASSSILVHGFSWLYG, ISIALISITVGIGFKLSPAPF, WHLLLEILAILSMILGNLIAI, MLAYSSIGQIGYVIIGIIVGD, GYASMITYMLFYISMNLGTFA, ALSSALCLLSLGGLPPLAGFF, and LHLFWCGWQAGLYFLVSIGLL.

This sequence belongs to the complex I subunit 2 family. In terms of assembly, NDH is composed of at least 16 different subunits, 5 of which are encoded in the nucleus.

It localises to the plastid. It is found in the chloroplast thylakoid membrane. It carries out the reaction a plastoquinone + NADH + (n+1) H(+)(in) = a plastoquinol + NAD(+) + n H(+)(out). The enzyme catalyses a plastoquinone + NADPH + (n+1) H(+)(in) = a plastoquinol + NADP(+) + n H(+)(out). Functionally, NDH shuttles electrons from NAD(P)H:plastoquinone, via FMN and iron-sulfur (Fe-S) centers, to quinones in the photosynthetic chain and possibly in a chloroplast respiratory chain. The immediate electron acceptor for the enzyme in this species is believed to be plastoquinone. Couples the redox reaction to proton translocation, and thus conserves the redox energy in a proton gradient. The sequence is that of NAD(P)H-quinone oxidoreductase subunit 2, chloroplastic from Allium textile (Textile onion).